The chain runs to 145 residues: Hemoglobin subunit beta-A (145 aa).

The 145-residue stretch at 1–145 (MLTAEEKAAV…VANALAHRYH (145 aa)) folds into the Globin domain. Heme b contacts are provided by H62 and H91.

The protein belongs to the globin family. In terms of assembly, heterotetramer of two alpha chains and two beta chains. In terms of tissue distribution, red blood cells.

In terms of biological role, involved in oxygen transport from the lung to the various peripheral tissues. This is Hemoglobin subunit beta-A from Bos javanicus (Wild banteng).